We begin with the raw amino-acid sequence, 722 residues long: Polyribonucleotide nucleotidyltransferase (722 aa).

Residues Asp487 and Asp493 each contribute to the Mg(2+) site. The region spanning 554-613 (PRMVSFKIHPDKIREVIGKGGATIQALTKETGCSIDIKDDGTVTIASTSAEGMAEAKARI) is the KH domain. In terms of domain architecture, S1 motif spans 623–691 (GKIYEGPVVK…ERGRLRLSLK (69 aa)).

It belongs to the polyribonucleotide nucleotidyltransferase family. Mg(2+) serves as cofactor.

Its subcellular location is the cytoplasm. The enzyme catalyses RNA(n+1) + phosphate = RNA(n) + a ribonucleoside 5'-diphosphate. Its function is as follows. Involved in mRNA degradation. Catalyzes the phosphorolysis of single-stranded polyribonucleotides processively in the 3'- to 5'-direction. The protein is Polyribonucleotide nucleotidyltransferase of Polynucleobacter necessarius subsp. necessarius (strain STIR1).